We begin with the raw amino-acid sequence, 201 residues long: Cell division protein SepF (201 aa).

The span at 27–38 shows a compositional bias: basic and acidic residues; that stretch reads VQERTSVQRDSR. Residues 27–99 are disordered; sequence VQERTSVQRD…PRVQNKDSVR (73 aa). Residues 43–54 show a composition bias toward polar residues; it reads QEASQRSHMTNS. The segment covering 72–81 has biased composition (basic and acidic residues); that stretch reads NRQERQRVQR. Residues 83–92 are compositionally biased toward polar residues; it reads NAYQQATPRV.

This sequence belongs to the SepF family. Homodimer. Interacts with FtsZ.

The protein resides in the cytoplasm. Functionally, cell division protein that is part of the divisome complex and is recruited early to the Z-ring. Probably stimulates Z-ring formation, perhaps through the cross-linking of FtsZ protofilaments. Its function overlaps with FtsA. In Streptococcus agalactiae serotype Ia (strain ATCC 27591 / A909 / CDC SS700), this protein is Cell division protein SepF.